The primary structure comprises 395 residues: Protein RIF2 (395 aa).

In terms of assembly, interacts with RIF1 and RAP1 C-terminus.

It localises to the nucleus. The protein resides in the chromosome. The protein localises to the telomere. Involved in transcriptional silencing and telomere length regulation. Its role in telomere length regulation results from either a block in elongation or promoting degradation of the telomere ends. Loss of RIF1 function results in derepression of an HMR silencer, whose ARS consensus element has been deleted, and in the elongation of telomeres. RAP1 may target the binding of RIF1 to silencers and telomeres. In Saccharomyces cerevisiae (strain ATCC 204508 / S288c) (Baker's yeast), this protein is Protein RIF2 (RIF2).